The chain runs to 253 residues: tRNA1(Val) (adenine(37)-N6)-methyltransferase (253 aa).

The protein belongs to the methyltransferase superfamily. tRNA (adenine-N(6)-)-methyltransferase family.

It localises to the cytoplasm. The enzyme catalyses adenosine(37) in tRNA1(Val) + S-adenosyl-L-methionine = N(6)-methyladenosine(37) in tRNA1(Val) + S-adenosyl-L-homocysteine + H(+). In terms of biological role, specifically methylates the adenine in position 37 of tRNA(1)(Val) (anticodon cmo5UAC). In Dickeya chrysanthemi (strain Ech1591) (Dickeya zeae (strain Ech1591)), this protein is tRNA1(Val) (adenine(37)-N6)-methyltransferase.